A 226-amino-acid chain; its full sequence is Ribonuclease S-7 (226 aa).

The signal sequence occupies residues 1–27 (MGITGMIYIVTMVFSLIVLILSSSTVG). Position 36 (Q36) interacts with RNA. A disulfide bond links C42 and C49. Position 60 (H60) interacts with RNA. Residue H60 is the Proton donor of the active site. N-linked (GlcNAc...) asparagine; alternate glycosylation is found at N74 and N77. C75 and C119 are disulfide-bonded. Residues 98-99 (NV), F108, 111-112 (KQ), and 115-116 (KH) each bind RNA. Q112 is an active-site residue. The Proton acceptor role is filled by H116. N-linked (GlcNAc...) asparagine glycosylation is found at N126, N144, and N172. 2 cysteine pairs are disulfide-bonded: C183/C220 and C198/C209.

It belongs to the RNase T2 family. The N-glycans attached at Asn-74 and Asn-77 consist of either monosaccharide (GlcNAc) or disaccharide (GlcNAc-GlcNAc) that could not be distinguished. The N-glycan at Asn-144 contains mannose and xylose, and at Asn-126 contains mannose, xylose and fucose. The N-glycan at Asn-172 consists of disaccharide (GlcNAc-GlcNAc).

The catalysed reaction is a ribonucleotidyl-ribonucleotide-RNA + H2O = a 3'-end 3'-phospho-ribonucleotide-RNA + a 5'-end dephospho-ribonucleoside-RNA + H(+). Its function is as follows. Self-incompatibility (SI) is the inherited ability of a flowering plant to prevent self-fertilization by discriminating between self and non-self pollen during pollination. In many species, self-incompatibility is controlled by the single, multiallelic locus S. The polypeptide is Ribonuclease S-7 (Pyrus pyrifolia (Chinese pear)).